The primary structure comprises 411 residues: uncharacterized protein (411 aa).

Disordered stretches follow at residues methionine 1–glutamate 91 and lysine 253–proline 280. A compositionally biased stretch (acidic residues) spans glutamate 46 to methionine 57. Over residues serine 74 to serine 86 the composition is skewed to low complexity. Residues arginine 258–proline 272 are compositionally biased toward basic and acidic residues. Serine 279 is modified (phosphoserine).

In terms of tissue distribution, widely expressed, highest levels in cerebellum, brain cortex, hippocampus, pons, putamen and amygdala. Highly expressed in neurons, but also present in glial cells. Slightly higher expression in the dorsolateral prefrontal cortex of schizophrenic patients compared to control individuals.

Its subcellular location is the cytoplasm. This is an uncharacterized protein from Homo sapiens (Human).